The chain runs to 449 residues: GTPase Der (449 aa).

EngA-type G domains lie at 3 to 167 (AVIA…PTSE) and 178 to 351 (PRIA…IDSR). GTP is bound by residues 9 to 16 (GRPNVGKS), 56 to 60 (DTGGF), 119 to 122 (NKMD), 184 to 191 (GRPNVGKS), 231 to 235 (DTAGM), and 296 to 299 (NKWD). The region spanning 352-436 (RHFSTAELNR…PLRLVFRQGE (85 aa)) is the KH-like domain.

It belongs to the TRAFAC class TrmE-Era-EngA-EngB-Septin-like GTPase superfamily. EngA (Der) GTPase family. As to quaternary structure, associates with the 50S ribosomal subunit.

GTPase that plays an essential role in the late steps of ribosome biogenesis. The chain is GTPase Der from Acidithiobacillus ferrooxidans (strain ATCC 23270 / DSM 14882 / CIP 104768 / NCIMB 8455) (Ferrobacillus ferrooxidans (strain ATCC 23270)).